The chain runs to 300 residues: Protoheme IX farnesyltransferase (300 aa).

9 helical membrane passes run 26–46, 54–74, 102–122, 123–143, 150–170, 177–197, 224–244, 246–266, and 279–299; these read VVQL…PGLP, IAWA…FNCI, LLFS…LVNP, LTMW…TLIL, NIVI…AAMT, ALIL…ALAL, VLLY…YGMS, WPYL…GFAL, and FRFS…DHYL.

It belongs to the UbiA prenyltransferase family. Protoheme IX farnesyltransferase subfamily.

The protein resides in the cell inner membrane. The catalysed reaction is heme b + (2E,6E)-farnesyl diphosphate + H2O = Fe(II)-heme o + diphosphate. It participates in porphyrin-containing compound metabolism; heme O biosynthesis; heme O from protoheme: step 1/1. In terms of biological role, converts heme B (protoheme IX) to heme O by substitution of the vinyl group on carbon 2 of heme B porphyrin ring with a hydroxyethyl farnesyl side group. The sequence is that of Protoheme IX farnesyltransferase from Verminephrobacter eiseniae (strain EF01-2).